A 341-amino-acid chain; its full sequence is Serine proteinase inhibitor 2 (341 aa).

This sequence belongs to the serpin family. Poxviruses subfamily.

The protein localises to the host cytoplasm. Functionally, viral serpin that inhibits both cysteine and serine proteinases involved in the regulation of host inflammatory and apoptosis processes. Major anti-apoptotic protein which inhibits both intrinsic and extrinsic pathways and strongly cleaves host CASP1 and CASP8 but is a rather poor inhibitor of host CASP3. Prevents the proteolytic activity of host interleukin-1-beta converting enzyme (ICE) and ICE-like enzymes. Can also block apoptosis through host tumor necrosis factor (TNF) receptor. This is Serine proteinase inhibitor 2 (OPG199) from Bos taurus (Bovine).